An 86-amino-acid chain; its full sequence is Neuropeptide precursor capa-1 (86 aa).

Positions 1–19 (MLLWIVATLLIFSLPVSTA) are cleaved as a signal peptide.

As to expression, expressed in two pairs of neurons in the anterior part of the nervous system (at protein level).

Its function is as follows. Encodes at least three neuropeptides: two of the periviscerokinin family (APHPSSALLVPYPRV-amide and LYMARV-amide) and one pyrokinin (AFFYTPRI-amide). Putative ligand for neuromedin U receptor homolog nmur-2. This Caenorhabditis elegans protein is Neuropeptide precursor capa-1.